A 310-amino-acid chain; its full sequence is uncharacterized protein (310 aa).

The segment at 1-70 (MAGNSQRRGA…ARGRTDETET (70 aa)) is disordered. Residues 49 to 62 (AAKRAKAQQRRPAR) are compositionally biased toward basic residues. Residues Gly-262, Val-282, and Leu-291 each coordinate S-adenosyl-L-methionine.

Belongs to the class IV-like SAM-binding methyltransferase superfamily. RNA methyltransferase TrmH family.

This is an uncharacterized protein from Mycobacterium ulcerans (strain Agy99).